The sequence spans 376 residues: MHRPELKNFRRIVVKVGSSLLIDSEAGEVKAAWLAALAADIAELHLHGRDVLIVSSGSIALGRSRLKLARGPLKLEESQAAAAVGQIALARIWSEVLGDHGIGAGQILVTLQDTEERRRYLNARSTIGKLLEWRAVPVINENDTVATAEIRYGDNDRLAARVATMSSADLLILLSDIDGLYDAPPGANPDAKLIPVVEQVTAEIEAMAGGAESELSRGGMRTKIEAAKIATTAGTHMLIASGKIDHPLRAIANGGACTWFLTPANPVTARKRWIAGSLEPKGTLTIDAGAVTALRAGKSLLPAGVIRVDGHFARGDAVVVRGPDTDEIGRGLVAYDADDADRIKGHSSPDVMSILGITGRAEMIHRDDLVMGAVPG.

Lys15 contacts ATP. Ser56, Asp143, and Asn155 together coordinate substrate. 175 to 176 (SD) contributes to the ATP binding site. In terms of domain architecture, PUA spans 281-358 (KGTLTIDAGA…PDVMSILGIT (78 aa)).

This sequence belongs to the glutamate 5-kinase family.

It is found in the cytoplasm. It catalyses the reaction L-glutamate + ATP = L-glutamyl 5-phosphate + ADP. The protein operates within amino-acid biosynthesis; L-proline biosynthesis; L-glutamate 5-semialdehyde from L-glutamate: step 1/2. Its function is as follows. Catalyzes the transfer of a phosphate group to glutamate to form L-glutamate 5-phosphate. This chain is Glutamate 5-kinase, found in Rhodopseudomonas palustris (strain BisB18).